The sequence spans 129 residues: DNA-directed RNA polymerase subunit omega (129 aa).

Positions 76 to 101 (EVDEPEPDPVTLAASAADGEDDDQPE) are disordered.

This sequence belongs to the RNA polymerase subunit omega family. The RNAP catalytic core consists of 2 alpha, 1 beta, 1 beta' and 1 omega subunit. When a sigma factor is associated with the core the holoenzyme is formed, which can initiate transcription.

The catalysed reaction is RNA(n) + a ribonucleoside 5'-triphosphate = RNA(n+1) + diphosphate. Its function is as follows. Promotes RNA polymerase assembly. Latches the N- and C-terminal regions of the beta' subunit thereby facilitating its interaction with the beta and alpha subunits. The chain is DNA-directed RNA polymerase subunit omega from Agrobacterium fabrum (strain C58 / ATCC 33970) (Agrobacterium tumefaciens (strain C58)).